A 211-amino-acid chain; its full sequence is Methylthioribulose-1-phosphate dehydratase (211 aa).

Residues His-101 and His-103 each contribute to the Zn(2+) site.

This sequence belongs to the aldolase class II family. MtnB subfamily. Zn(2+) is required as a cofactor.

It catalyses the reaction 5-(methylsulfanyl)-D-ribulose 1-phosphate = 5-methylsulfanyl-2,3-dioxopentyl phosphate + H2O. Its pathway is amino-acid biosynthesis; L-methionine biosynthesis via salvage pathway; L-methionine from S-methyl-5-thio-alpha-D-ribose 1-phosphate: step 2/6. Catalyzes the dehydration of methylthioribulose-1-phosphate (MTRu-1-P) into 2,3-diketo-5-methylthiopentyl-1-phosphate (DK-MTP-1-P). In Alcanivorax borkumensis (strain ATCC 700651 / DSM 11573 / NCIMB 13689 / SK2), this protein is Methylthioribulose-1-phosphate dehydratase.